The following is a 221-amino-acid chain: Adenylate kinase (221 aa).

10–15 (GAGKGT) contributes to the ATP binding site. The interval 30-59 (STGDMLRAAVKAGTPLGVEAKKVMDAGGLV) is NMP. Residues Thr31, Arg36, 57-59 (GLV), 85-88 (GFPR), and Gln92 each bind AMP. Residues 122-159 (GRRVHVASGRTYHVKYNPPKTEGVDDETGEALIQRDDD) form an LID region. Residues Arg123 and 132-133 (TY) each bind ATP. Arg156 and Arg167 together coordinate AMP. Residue Gly207 participates in ATP binding.

The protein belongs to the adenylate kinase family. In terms of assembly, monomer.

Its subcellular location is the cytoplasm. The enzyme catalyses AMP + ATP = 2 ADP. It functions in the pathway purine metabolism; AMP biosynthesis via salvage pathway; AMP from ADP: step 1/1. Functionally, catalyzes the reversible transfer of the terminal phosphate group between ATP and AMP. Plays an important role in cellular energy homeostasis and in adenine nucleotide metabolism. This Cupriavidus necator (strain ATCC 17699 / DSM 428 / KCTC 22496 / NCIMB 10442 / H16 / Stanier 337) (Ralstonia eutropha) protein is Adenylate kinase.